The following is a 350-amino-acid chain: UBX domain-containing protein 2B (350 aa).

Residues 1–29 (MEERENSEEGDDGAGEEEEEDQGSGEDGG) are compositionally biased toward acidic residues. The segment at 1-46 (MEERENSEEGDDGAGEEEEEDQGSGEDGGEVGAEREQEAELKDSLR) is disordered. Residues 32 to 45 (GAEREQEAELKDSL) show a composition bias toward basic and acidic residues. The SEP domain maps to 160–225 (EIQILLKLWS…MEDHQDQEYI (66 aa)). Residues 271–348 (EHVPTTKIQI…DILNTVILQR (78 aa)) enclose the UBX domain.

The protein belongs to the NSFL1C family.

Its subcellular location is the nucleus. The protein resides in the cytoplasm. The protein localises to the cytosol. It localises to the endoplasmic reticulum. It is found in the golgi apparatus. Its subcellular location is the cytoskeleton. The protein resides in the microtubule organizing center. The protein localises to the centrosome. Functionally, adapter protein required for Golgi and endoplasmic reticulum biogenesis. Involved in Golgi and endoplasmic reticulum maintenance during interphase and in their reassembly at the end of mitosis. Regulates the centrosomal levels of kinase aurka-a/Aurora A during mitotic progression by promoting aurka-a removal from centrosomes in prophase. Also, regulates spindle orientation during mitosis. The protein is UBX domain-containing protein 2B (ubxn2b) of Xenopus laevis (African clawed frog).